The primary structure comprises 240 residues: Endonuclease V (240 aa).

Residues aspartate 46 and aspartate 116 each contribute to the Mg(2+) site.

It belongs to the endonuclease V family. Mg(2+) serves as cofactor.

The protein localises to the cytoplasm. It carries out the reaction Endonucleolytic cleavage at apurinic or apyrimidinic sites to products with a 5'-phosphate.. DNA repair enzyme involved in the repair of deaminated bases. Selectively cleaves double-stranded DNA at the second phosphodiester bond 3' to a deoxyinosine leaving behind the intact lesion on the nicked DNA. In Rhodospirillum centenum (strain ATCC 51521 / SW), this protein is Endonuclease V.